A 478-amino-acid chain; its full sequence is Shikimate biosynthesis protein AroDE (478 aa).

The 3-dehydroquinate dehydratase stretch occupies residues 1-208 (MLCTIIRGPS…LNHHYFYNFT (208 aa)). 3-dehydroquinate is bound by residues serine 21, 29-31 (EMR), and 55-57 (TWK). Residue histidine 110 is the Proton donor/acceptor; for 3-dehydroquinate dehydratase activity of the active site. Catalysis depends on lysine 133, which acts as the Schiff-base intermediate with substrate; for 3-dehydroquinate dehydratase activity. Arginine 171 and glutamine 196 together coordinate 3-dehydroquinate. The tract at residues 209–478 (NLSPQSQICA…VLASLFSIAA (270 aa)) is shikimate 5-dehydrogenase. Residue 226–228 (SIG) coordinates shikimate. Lysine 277 functions as the Proton acceptor; for shikimate dehydrogenase activity in the catalytic mechanism. 2 residues coordinate shikimate: asparagine 298 and aspartate 313. NADP(+) contacts are provided by residues 337–341 (GAGGA), 360–362 (NRT), and glycine 435. Residue glutamine 442 coordinates shikimate.

In the N-terminal section; belongs to the type-I 3-dehydroquinase family. It in the C-terminal section; belongs to the shikimate dehydrogenase family.

The catalysed reaction is 3-dehydroquinate = 3-dehydroshikimate + H2O. It carries out the reaction shikimate + NADP(+) = 3-dehydroshikimate + NADPH + H(+). It functions in the pathway metabolic intermediate biosynthesis; chorismate biosynthesis; chorismate from D-erythrose 4-phosphate and phosphoenolpyruvate: step 3/7. Its pathway is metabolic intermediate biosynthesis; chorismate biosynthesis; chorismate from D-erythrose 4-phosphate and phosphoenolpyruvate: step 4/7. Functionally, bifunctional enzyme that catalyzes two sequential steps of the aromatic amino acids biosynthetic pathway. In the first reaction, the AroD domain catalyzes the cis-dehydration of 3-dehydroquinate (DHQ) and introduces the first double bond of the aromatic ring to yield 3-dehydroshikimate; in the second reaction, the AroE domain catalyzes the reversible NADPH linked reduction of 3-dehydroshikimate (DHSA) to yield shikimate (SA). The polypeptide is Shikimate biosynthesis protein AroDE (Chlamydia muridarum (strain MoPn / Nigg)).